Reading from the N-terminus, the 66-residue chain is DNA gyrase inhibitor YacG (66 aa).

Zn(2+) contacts are provided by Cys-9, Cys-12, Cys-28, and Cys-32. The interval 45-66 is disordered; sequence HKIAGAEESEDELYSGDLEPRH.

Belongs to the DNA gyrase inhibitor YacG family. In terms of assembly, interacts with GyrB. It depends on Zn(2+) as a cofactor.

Inhibits all the catalytic activities of DNA gyrase by preventing its interaction with DNA. Acts by binding directly to the C-terminal domain of GyrB, which probably disrupts DNA binding by the gyrase. In Pseudomonas entomophila (strain L48), this protein is DNA gyrase inhibitor YacG.